Reading from the N-terminus, the 317-residue chain is Membrane-associated protein VIPP1, chloroplastic (317 aa).

A coiled-coil region spans residues E92–A246. A disordered region spans residues D265–Y317. Over residues P297–Y317 the composition is skewed to basic and acidic residues.

The protein belongs to the PspA/Vipp/IM30 family. In terms of assembly, homomultimer. Complex formation involves interaction via the central alpha-helical domain (71-286). (Microbial infection) Interacts with the rice tungro bacilliform virus (RTBV) capsid protein.

The protein resides in the plastid. Its subcellular location is the chloroplast inner membrane. It is found in the chloroplast thylakoid membrane. In terms of biological role, required for plastid vesicle formation and thylakoid membrane biogenesis, but not for functional assembly of thylakoid protein complexes. This Oryza sativa subsp. japonica (Rice) protein is Membrane-associated protein VIPP1, chloroplastic.